A 750-amino-acid chain; its full sequence is Photosystem I P700 chlorophyll a apoprotein A1 (750 aa).

Helical transmembrane passes span 70-93 (VFSA…FHGA), 156-179 (LYCT…FHYH), 195-219 (LNHH…HVSL), 291-309 (IAHH…GHMY), 346-369 (WHAQ…HHMY), 385-411 (LSLF…IFMV), 433-455 (AIIS…LYIH), and 531-549 (FLVH…LILL). Residues cysteine 573 and cysteine 582 each contribute to the [4Fe-4S] cluster site. 2 helical membrane-spanning segments follow: residues 589 to 610 (HVFL…HFSW) and 664 to 686 (LSAY…MFLF). Residue histidine 675 coordinates chlorophyll a'. Residues methionine 683 and tyrosine 691 each contribute to the chlorophyll a site. Tryptophan 692 serves as a coordination point for phylloquinone. A helical transmembrane segment spans residues 724 to 744 (AVGVTHYLLGGIATTWAFFLA).

It belongs to the PsaA/PsaB family. The PsaA/B heterodimer binds the P700 chlorophyll special pair and subsequent electron acceptors. PSI consists of a core antenna complex that captures photons, and an electron transfer chain that converts photonic excitation into a charge separation. The eukaryotic PSI reaction center is composed of at least 11 subunits. The cofactor is P700 is a chlorophyll a/chlorophyll a' dimer, A0 is one or more chlorophyll a, A1 is one or both phylloquinones and FX is a shared 4Fe-4S iron-sulfur center..

It is found in the plastid. The protein resides in the chloroplast thylakoid membrane. It carries out the reaction reduced [plastocyanin] + hnu + oxidized [2Fe-2S]-[ferredoxin] = oxidized [plastocyanin] + reduced [2Fe-2S]-[ferredoxin]. In terms of biological role, psaA and PsaB bind P700, the primary electron donor of photosystem I (PSI), as well as the electron acceptors A0, A1 and FX. PSI is a plastocyanin-ferredoxin oxidoreductase, converting photonic excitation into a charge separation, which transfers an electron from the donor P700 chlorophyll pair to the spectroscopically characterized acceptors A0, A1, FX, FA and FB in turn. Oxidized P700 is reduced on the lumenal side of the thylakoid membrane by plastocyanin. The sequence is that of Photosystem I P700 chlorophyll a apoprotein A1 from Lepidium virginicum (Virginia pepperweed).